Here is a 449-residue protein sequence, read N- to C-terminus: Probable pectate lyase P59 (449 aa).

The signal sequence occupies residues 1 to 22 (MGGPKIKYSFLFLCITFATIIP). Asn-56, Asn-80, and Asn-81 each carry an N-linked (GlcNAc...) asparagine glycan. Ca(2+) is bound by residues Asp-245, Asp-269, and Asp-273. The active site involves Arg-325.

The protein belongs to the polysaccharide lyase 1 family. Ca(2+) is required as a cofactor. Expressed in anthers and pollen.

It carries out the reaction Eliminative cleavage of (1-&gt;4)-alpha-D-galacturonan to give oligosaccharides with 4-deoxy-alpha-D-galact-4-enuronosyl groups at their non-reducing ends.. Its pathway is glycan metabolism; pectin degradation; 2-dehydro-3-deoxy-D-gluconate from pectin: step 2/5. Its function is as follows. Might be needed during pollen development and tube growth. This chain is Probable pectate lyase P59 (LAT59), found in Solanum lycopersicum (Tomato).